The sequence spans 231 residues: Small ribosomal subunit protein bS18c (231 aa).

Disordered stretches follow at residues Met1–Ser31 and Gln95–Lys231. A compositionally biased stretch (basic residues) spans Ile9 to Arg26. Composition is skewed to basic and acidic residues over residues Gln95 to Arg151, Thr159 to Thr169, and Thr212 to Lys231.

Belongs to the bacterial ribosomal protein bS18 family. Part of the 30S ribosomal subunit.

It is found in the plastid. It localises to the chloroplast. The protein is Small ribosomal subunit protein bS18c of Jasminum nudiflorum (Winter jasmine).